Reading from the N-terminus, the 175-residue chain is MVRLRETEVILRLCIVFFILLSSCLIGLDSQTKEIAYIHKKVSFRYLLALEAELYINVVVAAYNLVQIGLGWYNVEQKTSNPKWFSYLLDQTAAYVVFAGTSAAAQHSLLVVTGSRELQWMKWCYKFTRFCFQMGSAIILNYIAAALMVLLSSISAFNLFRLYSPKRFFSFKSSS.

Residues 1-7 lie on the Cytoplasmic side of the membrane; that stretch reads MVRLRET. The chain crosses the membrane as a helical span at residues 8 to 28; the sequence is EVILRLCIVFFILLSSCLIGL. Topologically, residues 29–51 are extracellular; that stretch reads DSQTKEIAYIHKKVSFRYLLALE. The helical transmembrane segment at 52–72 threads the bilayer; that stretch reads AELYINVVVAAYNLVQIGLGW. Residues 73–91 lie on the Cytoplasmic side of the membrane; sequence YNVEQKTSNPKWFSYLLDQ. Residues 92 to 112 form a helical membrane-spanning segment; sequence TAAYVVFAGTSAAAQHSLLVV. The Extracellular portion of the chain corresponds to 113 to 136; it reads TGSRELQWMKWCYKFTRFCFQMGS. A helical transmembrane segment spans residues 137–157; it reads AIILNYIAAALMVLLSSISAF. Topologically, residues 158 to 175 are cytoplasmic; the sequence is NLFRLYSPKRFFSFKSSS.

This sequence belongs to the Casparian strip membrane proteins (CASP) family. Homodimer and heterodimers.

It localises to the cell membrane. This Arabidopsis lyrata subsp. lyrata (Lyre-leaved rock-cress) protein is CASP-like protein 2C1.